A 116-amino-acid polypeptide reads, in one-letter code: Flagellar transcriptional regulator FlhD (116 aa).

This sequence belongs to the FlhD family. In terms of assembly, homodimer; disulfide-linked. Forms a heterohexamer composed of two FlhC and four FlhD subunits. Each FlhC binds a FlhD dimer, forming a heterotrimer, and a hexamer assembles by dimerization of two heterotrimers.

Its subcellular location is the cytoplasm. Its function is as follows. Functions in complex with FlhC as a master transcriptional regulator that regulates transcription of several flagellar and non-flagellar operons by binding to their promoter region. Activates expression of class 2 flagellar genes, including fliA, which is a flagellum-specific sigma factor that turns on the class 3 genes. Also regulates genes whose products function in a variety of physiological pathways. This chain is Flagellar transcriptional regulator FlhD, found in Pectobacterium carotovorum subsp. carotovorum (strain PC1).